The sequence spans 408 residues: LL-diaminopimelate aminotransferase (408 aa).

Substrate-binding residues include Tyr15 and Gly42. Pyridoxal 5'-phosphate contacts are provided by residues Tyr72, 108 to 109, Tyr132, Asn187, Tyr218, and 246 to 248; these read SK and SFS. Positions 109, 132, and 187 each coordinate substrate. At Lys249 the chain carries N6-(pyridoxal phosphate)lysine. Positions 257 and 292 each coordinate pyridoxal 5'-phosphate. Residues Asn292 and Arg388 each contribute to the substrate site.

The protein belongs to the class-I pyridoxal-phosphate-dependent aminotransferase family. LL-diaminopimelate aminotransferase subfamily. In terms of assembly, homodimer. Requires pyridoxal 5'-phosphate as cofactor.

It carries out the reaction (2S,6S)-2,6-diaminopimelate + 2-oxoglutarate = (S)-2,3,4,5-tetrahydrodipicolinate + L-glutamate + H2O + H(+). The protein operates within amino-acid biosynthesis; L-lysine biosynthesis via DAP pathway; LL-2,6-diaminopimelate from (S)-tetrahydrodipicolinate (aminotransferase route): step 1/1. Involved in the synthesis of meso-diaminopimelate (m-DAP or DL-DAP), required for both lysine and peptidoglycan biosynthesis. Catalyzes the direct conversion of tetrahydrodipicolinate to LL-diaminopimelate. The protein is LL-diaminopimelate aminotransferase of Leptospira interrogans serogroup Icterohaemorrhagiae serovar Lai (strain 56601).